A 550-amino-acid chain; its full sequence is MAFNFNWSPLTADASFYKRARDLLTTALNKSPKPPIIVDDILVTEFNLGSVPPELEILEIGDLAEDRFRGIFKMTYSGDAFLTLKTRVQANPLNTYLYSKPSFTSPEPLAAASGLTIPLQITLSEIKLSAFIILVFSKQKGLTLVFRNDPLESLKVSSTFDSIQFVRDYLQRTIEGKLRNLMMDELPAIIHKLSLQLWCPEQMSKEDHEKTNEMDEQAVNPFASPPLDAVDAHGNLLDPIDISSIAVNGGAELQSLFSQKNLFRLGNLVNTQLTSSLFTPSVPEVIFRAKAGPVDKPEASSTTPLTTPSLVKSHSFHGTSTVYTFSDTSSQNNGQLPSRPSLVSLGSATTGLGLAASRNAKPYANRKKKTRVVNLRRKTDTAASSEMGDTMSDSASVQASESITMSDSIPEDPEEQPELTMSGSSRVRFGLGGERSALPQRPALRRDLFNPDEATASAEISQPQVARSTPEKETAAPVRTSENDKRSDSKRRGPRSETPSVILEQAWIMKMAGEIAKRVYDEKQRNPSFWDEREDSPPPAYEAQPTTAAS.

The SMP-LTD domain maps to 1-208; the sequence is MAFNFNWSPL…CPEQMSKEDH (208 aa). Disordered regions lie at residues 294–313, 358–505, and 519–550; these read VDKP…LVKS, RNAK…ILEQ, and VYDE…TAAS. Residues 300–310 are compositionally biased toward low complexity; sequence SSTTPLTTPSL. Residues 364–376 show a composition bias toward basic residues; that stretch reads ANRKKKTRVVNLR. Polar residues-rich tracts occupy residues 391-407 and 458-467; these read MSDS…TMSD and AEISQPQVAR. Residues 481–495 show a composition bias toward basic and acidic residues; that stretch reads SENDKRSDSKRRGPR.

It belongs to the MDM34 family. Component of the ER-mitochondria encounter structure (ERMES) or MDM complex, composed of MMM1, MDM10, MDM12 and MDM34.

Its subcellular location is the mitochondrion outer membrane. In terms of biological role, component of the ERMES/MDM complex, which serves as a molecular tether to connect the endoplasmic reticulum (ER) and mitochondria. Components of this complex are involved in the control of mitochondrial shape and protein biogenesis, and function in nonvesicular lipid trafficking between the ER and mitochondria. MDM34 is required for the interaction of the ER-resident membrane protein MMM1 and the outer mitochondrial membrane-resident beta-barrel protein MDM10. The polypeptide is Mitochondrial distribution and morphology protein 34 (Pyricularia oryzae (strain 70-15 / ATCC MYA-4617 / FGSC 8958) (Rice blast fungus)).